We begin with the raw amino-acid sequence, 244 residues long: tRNA pseudouridine synthase A (244 aa).

Asp-52 (nucleophile) is an active-site residue. Tyr-110 provides a ligand contact to substrate.

Belongs to the tRNA pseudouridine synthase TruA family. In terms of assembly, homodimer.

The catalysed reaction is uridine(38/39/40) in tRNA = pseudouridine(38/39/40) in tRNA. Formation of pseudouridine at positions 38, 39 and 40 in the anticodon stem and loop of transfer RNAs. The polypeptide is tRNA pseudouridine synthase A (Clostridium botulinum (strain Alaska E43 / Type E3)).